We begin with the raw amino-acid sequence, 491 residues long: Probable polygalacturonase (491 aa).

Residues P15–L35 form a helical membrane-spanning segment. N-linked (GlcNAc...) asparagine glycans are attached at residues N165, N175, and N214. PbH1 repeat units lie at residues S230–S256, C257–S278, I319–T340, and V348–G369. The Proton donor role is filled by D271. Residues N399 and N421 are each glycosylated (N-linked (GlcNAc...) asparagine).

The protein belongs to the glycosyl hydrolase 28 family.

The protein resides in the membrane. The catalysed reaction is (1,4-alpha-D-galacturonosyl)n+m + H2O = (1,4-alpha-D-galacturonosyl)n + (1,4-alpha-D-galacturonosyl)m.. This is Probable polygalacturonase from Vitis vinifera (Grape).